Here is a 123-residue protein sequence, read N- to C-terminus: uncharacterized protein (123 aa).

This is an uncharacterized protein from Schizosaccharomyces pombe (strain 972 / ATCC 24843) (Fission yeast).